The following is a 202-amino-acid chain: Glycerol-3-phosphate acyltransferase (202 aa).

Transmembrane regions (helical) follow at residues 11–31 (ALIA…GLIL), 87–107 (PALA…WLGF), 116–136 (FIGV…AIWL), and 158–178 (VILW…LAAL).

This sequence belongs to the PlsY family. In terms of assembly, probably interacts with PlsX.

Its subcellular location is the cell inner membrane. The enzyme catalyses an acyl phosphate + sn-glycerol 3-phosphate = a 1-acyl-sn-glycero-3-phosphate + phosphate. The protein operates within lipid metabolism; phospholipid metabolism. In terms of biological role, catalyzes the transfer of an acyl group from acyl-phosphate (acyl-PO(4)) to glycerol-3-phosphate (G3P) to form lysophosphatidic acid (LPA). This enzyme utilizes acyl-phosphate as fatty acyl donor, but not acyl-CoA or acyl-ACP. The polypeptide is Glycerol-3-phosphate acyltransferase (Methylorubrum populi (strain ATCC BAA-705 / NCIMB 13946 / BJ001) (Methylobacterium populi)).